A 540-amino-acid polypeptide reads, in one-letter code: Probable protein kinase UbiB (540 aa).

Residues 24–44 (LLFEQPLLPWWLASLRLLMPW) traverse the membrane as a helical segment. The region spanning 126–494 (RFDVEPLASA…RRRQGDRWAL (369 aa)) is the Protein kinase domain. ATP-binding positions include 132 to 140 (LASASVAQV) and K154. D289 serves as the catalytic Proton acceptor. A run of 2 helical transmembrane segments spans residues 496–516 (LLGA…AEAA) and 518–538 (LAAP…YLIV).

Belongs to the ABC1 family. UbiB subfamily.

It localises to the cell inner membrane. It functions in the pathway cofactor biosynthesis; ubiquinone biosynthesis [regulation]. Is probably a protein kinase regulator of UbiI activity which is involved in aerobic coenzyme Q (ubiquinone) biosynthesis. The chain is Probable protein kinase UbiB from Pseudomonas putida (strain GB-1).